The primary structure comprises 378 residues: tRNA-specific 2-thiouridylase MnmA (378 aa).

ATP contacts are provided by residues 7-14 (GLSGGVDS) and Met33. Residues 102 to 104 (NPD) form an interaction with target base in tRNA region. The active-site Nucleophile is the Cys107. Cys107 and Cys209 are oxidised to a cystine. Gly132 is an ATP binding site. Residues 159 to 161 (KDQ) are interaction with tRNA. Cys209 serves as the catalytic Cysteine persulfide intermediate. Residues 316–317 (RY) form an interaction with tRNA region.

Belongs to the MnmA/TRMU family.

The protein resides in the cytoplasm. It catalyses the reaction S-sulfanyl-L-cysteinyl-[protein] + uridine(34) in tRNA + AH2 + ATP = 2-thiouridine(34) in tRNA + L-cysteinyl-[protein] + A + AMP + diphosphate + H(+). In terms of biological role, catalyzes the 2-thiolation of uridine at the wobble position (U34) of tRNA, leading to the formation of s(2)U34. The protein is tRNA-specific 2-thiouridylase MnmA of Onion yellows phytoplasma (strain OY-M).